The chain runs to 193 residues: Putative manganese efflux pump MntP (193 aa).

The next 6 membrane-spanning stretches (helical) occupy residues 3–23 (PLSI…AAIG), 37–57 (VRAG…GWML), 66–86 (AAFD…HMIV), 109–131 (LALA…SLAF), 146–166 (CTLS…ALIG), and 171–191 (ILGG…HLSG).

It belongs to the MntP (TC 9.B.29) family.

Its subcellular location is the cell inner membrane. Functionally, probably functions as a manganese efflux pump. The polypeptide is Putative manganese efflux pump MntP (Xanthomonas campestris pv. campestris (strain 8004)).